A 224-amino-acid polypeptide reads, in one-letter code: MNSDLALLRLLQLASPGLPVGGFTYSQGLEWAVEAGWVRGVDSFAGWQREQVHDTLACLDWPVLARLYHACQAKDAEAFGHWSRFLLANRETAELRLEEQQRGAALARLLDGWQLGQAPAWRASLELTQLGGMAWLAAHWAIPLRQLALGHGFAWLEGAVMAGVKLVPFGQQAAQTLLRDLGADLPAALDQALALGDDQLGGGLPLLAIASSRHETQYTRLFRS.

This sequence belongs to the UreF family. As to quaternary structure, ureD, UreF and UreG form a complex that acts as a GTP-hydrolysis-dependent molecular chaperone, activating the urease apoprotein by helping to assemble the nickel containing metallocenter of UreC. The UreE protein probably delivers the nickel.

It is found in the cytoplasm. Required for maturation of urease via the functional incorporation of the urease nickel metallocenter. The chain is Urease accessory protein UreF from Pseudomonas putida (strain ATCC 47054 / DSM 6125 / CFBP 8728 / NCIMB 11950 / KT2440).